A 279-amino-acid polypeptide reads, in one-letter code: MFQLKNVTRQFGKKTAVSTVTFDIPQGQMVGIIGRSGAGKSTLLRMINRLVDPSSGSIEFAGLQVSSLKGAALRNWQRDCAMIFQQFNLVPRLDVLTNVLLGRLNHRSTVLSVLNMFSREERIMAIGALERLGIEQTALQPAGTLSGGQQQRVAIARALMQQPKVLLADEPIASLDPLNAKIVMDALRDINERDGITVITNLHTLDTARNYCERVIGMAHGRVVFDGQPKDLTAAAVAAIYGAETAIEESMTSTSINIPAEAPRETASAGLKPLALAGP.

The region spanning 2–245 (FQLKNVTRQF…AVAAIYGAET (244 aa)) is the ABC transporter domain. ATP is bound at residue 34 to 41 (GRSGAGKS).

Belongs to the ABC transporter superfamily. Phosphonates importer (TC 3.A.1.9.1) family. As to quaternary structure, the complex is composed of two ATP-binding proteins (PhnC), two transmembrane proteins (PhnE) and a solute-binding protein (PhnD).

Its subcellular location is the cell inner membrane. The enzyme catalyses phosphonate(out) + ATP + H2O = phosphonate(in) + ADP + phosphate + H(+). Its function is as follows. Part of the ABC transporter complex PhnCDE involved in phosphonates import. Responsible for energy coupling to the transport system. This chain is Phosphonates import ATP-binding protein PhnC, found in Rhizobium meliloti (strain 1021) (Ensifer meliloti).